Consider the following 141-residue polypeptide: Large ribosomal subunit protein uL11 (141 aa).

The protein belongs to the universal ribosomal protein uL11 family. Part of the ribosomal stalk of the 50S ribosomal subunit. Interacts with L10 and the large rRNA to form the base of the stalk. L10 forms an elongated spine to which L12 dimers bind in a sequential fashion forming a multimeric L10(L12)X complex. In terms of processing, one or more lysine residues are methylated.

In terms of biological role, forms part of the ribosomal stalk which helps the ribosome interact with GTP-bound translation factors. The sequence is that of Large ribosomal subunit protein uL11 from Ruminiclostridium cellulolyticum (strain ATCC 35319 / DSM 5812 / JCM 6584 / H10) (Clostridium cellulolyticum).